The chain runs to 281 residues: 2-hydroxymuconate semialdehyde hydrolase (281 aa).

Positions 30 to 55 (FPALLIHGSGPASPPGPTGAGSFRSS) are disordered. Positions 31–261 (PALLIHGSGP…QCGHWTQIEH (231 aa)) constitute an AB hydrolase-1 domain. Catalysis depends on residues Ser-106, Asp-227, and His-255.

This sequence belongs to the DmpD/TodF/XylF esterase family.

It catalyses the reaction (2Z,4E)-2-hydroxy-6-oxohexa-2,4-dienoate + H2O = 2-oxopent-4-enoate + formate + H(+). It participates in aromatic compound metabolism; benzoate degradation via hydroxylation. Its function is as follows. Catalyzes the conversion of 2-hydroxymuconate semialdehyde to 2-hydroxypent-2,4-dienoate. This chain is 2-hydroxymuconate semialdehyde hydrolase (xylF), found in Pseudomonas putida (Arthrobacter siderocapsulatus).